We begin with the raw amino-acid sequence, 616 residues long: Heme A synthase-mitochondrial ferredoxin fusion protein (616 aa).

The N-terminal 45 residues, 1–45, are a transit peptide targeting the mitochondrion; sequence MNISRSSGLMRQFLLQPLRKGCDISCLGRSSWRMSRSFSGSSVLN. The heme a synthase cox15-like stretch occupies residues 45-465; it reads NEINLSRTKN…AALSLAQRLH (421 aa). The Mitochondrial matrix portion of the chain corresponds to 46–97; the sequence is EINLSRTKNLFLNDCKFNKNSFEKFFARRLSNSVAPTPGGILQETEKIPSKK. The chain crosses the membrane as a helical span at residues 98 to 118; that stretch reads VAFWLLGSSALVLAIVVVGGI. Residues 119–182 lie on the Mitochondrial intermembrane side of the membrane; it reads TRLTESGLSI…NIFFWEWFHR (64 aa). His181 lines the heme o pocket. A helical membrane pass occupies residues 183-203; that stretch reads VLGRGIGLTILLPSIYMIVTK. Residues 204 to 212 lie on the Mitochondrial matrix side of the membrane; sequence RASPWLSKR. Residues 213–233 traverse the membrane as a helical segment; the sequence is LIGLTGLVGLQGVIGWWMVKS. Residues 234–254 are Mitochondrial intermembrane-facing; sequence GLSEELFSDGSHPRVSHYRLA. A helical membrane pass occupies residues 255–275; it reads THLAAAVALYIGLVWTGHGIL. Heme o is bound at residue His256. The Mitochondrial matrix segment spans residues 276–311; it reads QRHAFLKSMKSGSTSQLTSMVSSVQKMKGFRTSVNS. Residues 312–332 traverse the membrane as a helical segment; it reads FVGLVLITLLSGAFVAGLDAG. Topologically, residues 333–380 are mitochondrial intermembrane; that stretch reads MIYCTFPEMGEGRLAPSKSELFDQRFCRKDDKSDLIWRNMIDNPSLVQ. Residues 381-401 form a helical membrane-spanning segment; sequence LEHRILAITTFVAACGLFIFS. Heme b is bound at residue His383. The Mitochondrial matrix segment spans residues 402–417; the sequence is RAKRNILPKKIKTSIN. The helical transmembrane segment at 418–438 threads the bilayer; that stretch reads VVTGVVTAQATLGIMTLIYVV. Residue Pro439 is a topological domain, mitochondrial intermembrane. Residues 440–460 traverse the membrane as a helical segment; sequence VPLAALHQAGSLVTLTAALSL. His446 serves as a coordination point for heme b. At 461–616 the chain is on the mitochondrial matrix side; the sequence is AQRLHPEYAL…RNIRLERPKA (156 aa). A 2Fe-2S ferredoxin-type domain is found at 502–606; that stretch reads FRPSFHSEIK…GIRVRIPAQT (105 aa). Residues 516–616 are mitochondrial ferredoxin yah1-like; the sequence is GTGIKVFFVT…RNIRLERPKA (101 aa). The [2Fe-2S] cluster site is built by Cys541, Cys547, Cys550, and Cys587.

The protein in the N-terminal section; belongs to the COX15/CtaA family. Type 2 subfamily. It in the C-terminal section; belongs to the adrenodoxin/putidaredoxin family. As to quaternary structure, homodimer. The cofactor is heme b. [2Fe-2S] cluster serves as cofactor. In terms of processing, the etp1 preprotein is cleaved into 2 chains after imort into mitochondria. The N-terminal chain containing a heme A synthase cox15-like domain etp1(cd) is a subunit of the membrane-embedded cytochrome c oxidase complex and functions in the respiratory chain. The C-terminal chain containing a ferredoxin yah1-like domain etp1(fd) is released and serves in the matrix as electron transfer protein.

It is found in the mitochondrion inner membrane. The protein localises to the mitochondrion matrix. The enzyme catalyses Fe(II)-heme o + 2 A + H2O = Fe(II)-heme a + 2 AH2. It participates in porphyrin-containing compound metabolism; heme A biosynthesis; heme A from heme O: step 1/1. Functionally, catalyzes the second reaction in the biosynthesis of heme A, a prosthetic group of mitochondrial cytochrome c oxidase (CcO). Heme A is synthesized from heme B by two sequential enzymatic reactions catalyzed by heme O synthase (HOS) and heme A synthase (HAS). HAS catalyzes the conversion of heme O to heme A by two successive hydroxylations of the methyl group at C8, in a reaction that involves matrix ferredoxin and ferredoxin reductase. The first hydroxylation forms heme I, the second hydroxylation results in an unstable dihydroxymethyl group, which spontaneously dehydrates, resulting in the formyl group of heme A. Its function is as follows. Iron-sulfur protein that transfers electrons in a wide variety of metabolic reactions. Involved in heme A biosynthesis and in iron-sulfur cluster assembly. Transfers electrons from adrenodoxin reductase arh1 to heme A synthase etp1(cd), a heme protein that catalyzes the conversion of heme O to heme A. Required for the de novo synthesis of Fe-S clusters on iron sulfur cluster assembly protein isu1. Interact in its reduced state with isu1 to productively deliver electrons for Fe-S cluster synthesis. Essential for coenzyme Q biosynthesis. May transfer the electrons required for the hydroxylation reaction performed by coq6. The polypeptide is Heme A synthase-mitochondrial ferredoxin fusion protein (Schizosaccharomyces pombe (strain 972 / ATCC 24843) (Fission yeast)).